Here is a 360-residue protein sequence, read N- to C-terminus: Uroporphyrinogen decarboxylase (360 aa).

Substrate is bound by residues 27–31 (RQSGR), phenylalanine 46, aspartate 77, tyrosine 154, threonine 209, and histidine 327.

It belongs to the uroporphyrinogen decarboxylase family. As to quaternary structure, homodimer.

The protein localises to the cytoplasm. It catalyses the reaction uroporphyrinogen III + 4 H(+) = coproporphyrinogen III + 4 CO2. The protein operates within porphyrin-containing compound metabolism; protoporphyrin-IX biosynthesis; coproporphyrinogen-III from 5-aminolevulinate: step 4/4. Catalyzes the decarboxylation of four acetate groups of uroporphyrinogen-III to yield coproporphyrinogen-III. The polypeptide is Uroporphyrinogen decarboxylase (Wigglesworthia glossinidia brevipalpis).